Consider the following 595-residue polypeptide: MPACCSWNDVFQYETNKVTRIQSVNYGTIKWILHMTVFSYVSFALMSDKLYQRKEPLISSVHTKVKGVAEVTENVTEGGVTKLVHGIFDTADYTLPLQGNSFFVMTNYLKSEGQEQKLCPEYPSRGKQCHSDQGCIKGWMDPQSKGIQTGRCIPYDQKRKTCEIFAWCPAEEGKEAPRPALLRSAENFTVLIKNNIDFPGHNYTTRNILPGMNISCTFHKTWNPQCPIFRLGDIFQEIGENFTEVAVQGGIMGIEIYWDCNLDSWSHRCQPKYSFRRLDDKYTNESLFPGYNFRYAKYYKENGMEKRTLIKAFGVRFDILVFGTGGKFDIIQLVVYIGSTLSYFGLATVCIDLIINTYASTCCRSRVYPSCKCCEPCAVNEYYYRKKCEPIVEPKPTLKYVSFVDEPHIWMVDQQLLGKSLQDVKGQEVPRPQTDFLELSRLSLSLHHSPPIPGQPEEMQLLQIEAVPRSRDSPDWCQCGNCLPSQLPENRRALEELCCRRKPGQCITTSELFSKIVLSREALQLLLLYQEPLLALEGEAINSKLRHCAYRSYATWRFVSQDMADFAILPSCCRWKIRKEFPKTQGQYSGFKYPY.

Over 1-22 (MPACCSWNDVFQYETNKVTRIQ) the chain is Cytoplasmic. A lipid anchor (S-palmitoyl cysteine) is attached at C4. A helical transmembrane segment spans residues 23 to 46 (SVNYGTIKWILHMTVFSYVSFALM). The Extracellular portion of the chain corresponds to 47–328 (SDKLYQRKEP…ILVFGTGGKF (282 aa)). A glycan (N-linked (GlcNAc...) asparagine) is linked at N74. 3 disulfides stabilise this stretch: C119–C168, C129–C152, and C135–C162. R125 is modified (ADP-ribosylarginine). N-linked (GlcNAc...) asparagine glycosylation occurs at N187. T189 is an ATP binding site. 2 N-linked (GlcNAc...) asparagine glycosylation sites follow: N202 and N213. C216 and C226 form a disulfide bridge. N-linked (GlcNAc...) asparagine glycosylation occurs at N241. The cysteines at positions 260 and 269 are disulfide-linked. N284 carries an N-linked (GlcNAc...) asparagine glycan. The ATP site is built by R294 and K311. Residues 329–353 (DIIQLVVYIGSTLSYFGLATVCIDL) traverse the membrane as a helical segment. Position 342 (S342) interacts with Na(+). Over 354–595 (IINTYASTCC…GQYSGFKYPY (242 aa)) the chain is Cytoplasmic. A C-cys anchor region spans residues 360–377 (STCCRSRVYPSCKCCEPC). S-palmitoyl cysteine attachment occurs at residues C362, C363, C374, and C377. The interval 395–595 (KPTLKYVSFV…GQYSGFKYPY (201 aa)) is cytoplasmic ballast. C479, C499, and C506 together coordinate Zn(2+). GTP-binding residues include R546, H547, Y550, and A567. C572 lines the Zn(2+) pocket. GTP contacts are provided by K583, S589, and G590.

The protein belongs to the P2X receptor family. Homotrimer. Interacts with LAMA3, ITGB2, ACTB, ACTN4, SVIL, MPP3, HSPA1, HSPCB, HSPA8, PIK230 and PTPRB. Interacts (via C-terminus) with EMP2. Post-translationally, phosphorylation results in its inactivation. ADP-ribosylation at Arg-125 is necessary and sufficient to activate P2RX7 and gate the channel. In terms of processing, palmitoylation of several cysteines in the C-terminal cytoplasmic tail is required for efficient localization to cell surface. Palmitoylation prevents channel desensitization by physically anchoring the palmitoylated groups to the membrane.

The protein resides in the cell membrane. It catalyses the reaction Ca(2+)(in) = Ca(2+)(out). The enzyme catalyses K(+)(in) = K(+)(out). It carries out the reaction Na(+)(in) = Na(+)(out). Activated by high extracellular ATP levels (0.1-2.5 mM). The synthetic analog 2'(3')-O-(4-benzoylbenzoyl)ATP (BzATP) acts as a potent agonist. Does not undergo desensitization, instead, undergoes a facilitation process where currents progressively increase with repetitive or prolonged agonist application. Palmitoylation prevents channel desensitization. The permeability of the P2RX7 channel is modulated by the amount of cholesterol in the plasma membrane. In terms of biological role, ATP-gated nonselective transmembrane cation channel that requires high millimolar concentrations of ATP for activation. Upon ATP binding, it rapidly opens to allow the influx of small cations Na(+) and Ca(2+), and the K(+) efflux. Also has the ability to form a large pore in the cell membrane, allowing the passage of large cationic molecules. In microglia, may mediate the transmembrane transport of exogenous NADPH. In immune cells, P2RX7 acts as a molecular sensor in pathological inflammatory states by detecting and responding to high local concentrations of extracellar ATP. In microglial cells, P2RX7 activation leads to the release of pro-inflammatory cytokines, such as IL-1beta and IL-18, through the activation of the NLRP3 inflammasome and caspase-1. Cooperates with KCNK6 to activate NLRP3 inflammasome. Activates death pathways leading to apoptosis and autophagy. Activates death pathways leading to pyroptosis. Its function is as follows. Has a higher affinity for ATP, slower deactivation and an increased propensity to form large cation-permeable pores. This chain is P2X purinoceptor 7 (P2rx7), found in Rattus norvegicus (Rat).